The following is a 351-amino-acid chain: Prostaglandin reductase 2 (351 aa).

99–100 (FY) provides a ligand contact to substrate. NADP(+) contacts are provided by residues 165–168 (GACG), K192, Y208, N231, 253–259 (CGQISQY), 287–289 (FLV), and N337. 288–290 (LVL) is a substrate binding site.

The protein belongs to the NADP-dependent oxidoreductase L4BD family. Monomer.

It localises to the cytoplasm. It catalyses the reaction 13,14-dihydro-15-oxo-prostaglandin E2 + NAD(+) = 15-oxoprostaglandin E2 + NADH + H(+). It carries out the reaction 13,14-dihydro-15-oxo-prostaglandin E2 + NADP(+) = 15-oxoprostaglandin E2 + NADPH + H(+). The catalysed reaction is 13,14-dihydro-15-oxo-PGF2alpha + NADP(+) = 15-oxoprostaglandin F2alpha + NADPH + H(+). The enzyme catalyses 13,14-dihydro-15-oxo-prostaglandin E1 + NADP(+) = 15-oxoprostaglandin E1 + NADPH + H(+). It catalyses the reaction 13,14-dihydro-15-oxo-prostaglandin F1alpha + NADP(+) = 15-oxoprostaglandin F1alpha + NADPH + H(+). In terms of biological role, functions as 15-oxo-prostaglandin 13-reductase and acts on 15-keto-PGE1, 15-keto-PGE2, 15-keto-PGE1-alpha and 15-keto-PGE2-alpha with highest activity towards 15-keto-PGE2. Overexpression represses transcriptional activity of PPARG and inhibits adipocyte differentiation. The chain is Prostaglandin reductase 2 (PTGR2) from Pongo abelii (Sumatran orangutan).